The chain runs to 782 residues: E3 UFM1-protein ligase 1 homolog (782 aa).

Residues 405 to 478 (VSTQELEDDG…TRGGGGASKK (74 aa)) are disordered.

Belongs to the UFL1 family.

E3 UFM1-protein ligase that mediates ufmylation of target proteins. The polypeptide is E3 UFM1-protein ligase 1 homolog (Drosophila simulans (Fruit fly)).